The chain runs to 341 residues: Putative amino-acid ABC transporter-binding protein YhdW (341 aa).

Positions 1–19 are cleaved as a signal peptide; that stretch reads MKKMMIATLAAASVLLAVA.

This sequence belongs to the bacterial solute-binding protein 3 family.

The protein localises to the periplasm. Functionally, probably part of the binding-protein-dependent transport system YdhWXYZ for an amino acid. The protein is Putative amino-acid ABC transporter-binding protein YhdW (yhdW) of Escherichia coli O157:H7.